Reading from the N-terminus, the 453-residue chain is Ribulose bisphosphate carboxylase large chain (453 aa).

Residues 1 to 2 constitute a propeptide that is removed on maturation; it reads MS. At Pro-3 the chain carries N-acetylproline. The residue at position 14 (Lys-14) is an N6,N6,N6-trimethyllysine. Residues Asn-123 and Thr-173 each contribute to the substrate site. Residue Lys-175 is the Proton acceptor of the active site. Lys-177 contacts substrate. Positions 201, 203, and 204 each coordinate Mg(2+). Lys-201 is subject to N6-carboxylysine. His-294 acts as the Proton acceptor in catalysis. Positions 295, 327, and 379 each coordinate substrate.

This sequence belongs to the RuBisCO large chain family. Type I subfamily. Heterohexadecamer of 8 large chains and 8 small chains; disulfide-linked. The disulfide link is formed within the large subunit homodimers. It depends on Mg(2+) as a cofactor. Post-translationally, the disulfide bond which can form in the large chain dimeric partners within the hexadecamer appears to be associated with oxidative stress and protein turnover.

The protein resides in the plastid. It localises to the chloroplast. The enzyme catalyses 2 (2R)-3-phosphoglycerate + 2 H(+) = D-ribulose 1,5-bisphosphate + CO2 + H2O. It carries out the reaction D-ribulose 1,5-bisphosphate + O2 = 2-phosphoglycolate + (2R)-3-phosphoglycerate + 2 H(+). RuBisCO catalyzes two reactions: the carboxylation of D-ribulose 1,5-bisphosphate, the primary event in carbon dioxide fixation, as well as the oxidative fragmentation of the pentose substrate in the photorespiration process. Both reactions occur simultaneously and in competition at the same active site. This Galium album (White bedstraw) protein is Ribulose bisphosphate carboxylase large chain.